An 809-amino-acid chain; its full sequence is Eukaryotic translation initiation factor 3 subunit C (809 aa).

The disordered stretch occupies residues 1–102 (MSRFFAASYE…DSDESDEASK (102 aa)). Acidic residues-rich tracts occupy residues 18–30 (SEED…EEEL) and 37–59 (SEEE…DSDD). The 176-residue stretch at 605 to 780 (FHEHINLDLI…SVLSIAKGAE (176 aa)) folds into the PCI domain.

It belongs to the eIF-3 subunit C family. In terms of assembly, component of the eukaryotic translation initiation factor 3 (eIF-3) complex.

It is found in the cytoplasm. In terms of biological role, component of the eukaryotic translation initiation factor 3 (eIF-3) complex, which is involved in protein synthesis of a specialized repertoire of mRNAs and, together with other initiation factors, stimulates binding of mRNA and methionyl-tRNAi to the 40S ribosome. The eIF-3 complex specifically targets and initiates translation of a subset of mRNAs involved in cell proliferation. The polypeptide is Eukaryotic translation initiation factor 3 subunit C (Vanderwaltozyma polyspora (strain ATCC 22028 / DSM 70294 / BCRC 21397 / CBS 2163 / NBRC 10782 / NRRL Y-8283 / UCD 57-17) (Kluyveromyces polysporus)).